A 479-amino-acid polypeptide reads, in one-letter code: Cysteine protease effector 1 (479 aa).

This Escherichia coli O1:K1:H7 (strain ATCC 11775 / DSM 30083 / JCM 1649 / NBRC 102203 / NCTC 9001 / U5/41) protein is Cysteine protease effector 1.